The chain runs to 405 residues: uncharacterized protein (405 aa).

12 helical membrane passes run 3–23 (IIAK…PTTE), 42–62 (GITQ…ILTL), 73–93 (PIAL…IFAV), 95–115 (IEML…GSVI), 135–155 (SLSP…GYII), 162–182 (YVFV…YKVL), 209–229 (ILWL…GFFI), 248–268 (KLAF…GYLI), 280–300 (GLGF…AFIL), 309–329 (LAIA…NLLI), 346–366 (TAGS…TYLV), and 377–397 (FALL…CIWV).

It belongs to the major facilitator superfamily. Bcr/CmlA family.

Its subcellular location is the cell inner membrane. This is an uncharacterized protein from Rickettsia felis (strain ATCC VR-1525 / URRWXCal2) (Rickettsia azadi).